The following is a 299-amino-acid chain: Probable lipid kinase YegS-like (299 aa).

A DAGKc domain is found at 2–133; that stretch reads SRSAGSFLIL…IDIAHVNDKT (132 aa). ATP contacts are provided by residues T40, 66 to 72, and T95; that span reads GDGTINE. The Mg(2+) site is built by L215, D218, and L220. The active-site Proton acceptor is E271.

It belongs to the diacylglycerol/lipid kinase family. YegS lipid kinase subfamily. The cofactor is Mg(2+). Requires Ca(2+) as cofactor.

Its subcellular location is the cytoplasm. In terms of biological role, probably phosphorylates lipids; the in vivo substrate is unknown. This chain is Probable lipid kinase YegS-like, found in Cronobacter sakazakii (strain ATCC BAA-894) (Enterobacter sakazakii).